A 97-amino-acid chain; its full sequence is uncharacterized protein (97 aa).

This is an uncharacterized protein from Schizosaccharomyces pombe (strain 972 / ATCC 24843) (Fission yeast).